Here is a 187-residue protein sequence, read N- to C-terminus: dCTP deaminase (187 aa).

Residues 107–112 (KSTYAR), 131–133 (TLE), Gln-152, Tyr-166, Lys-175, and Gln-176 contribute to the dCTP site. Residue Glu-133 is the Proton donor/acceptor of the active site.

It belongs to the dCTP deaminase family. As to quaternary structure, homotrimer.

It catalyses the reaction dCTP + H2O + H(+) = dUTP + NH4(+). Its pathway is pyrimidine metabolism; dUMP biosynthesis; dUMP from dCTP (dUTP route): step 1/2. Catalyzes the deamination of dCTP to dUTP. The chain is dCTP deaminase from Ehrlichia canis (strain Jake).